The primary structure comprises 409 residues: Putative lipoate-protein ligase A (409 aa).

A BPL/LPL catalytic domain is found at 146 to 330 (GPDNCRLVFY…RFQKTFKVDG (185 aa)). Residues arginine 188, 193-196 (GTVL), and lysine 249 contribute to the ATP site. Lysine 249 is a (R)-lipoate binding site.

Belongs to the LplA family. In terms of assembly, monomer.

It carries out the reaction L-lysyl-[lipoyl-carrier protein] + (R)-lipoate + ATP = N(6)-[(R)-lipoyl]-L-lysyl-[lipoyl-carrier protein] + AMP + diphosphate + H(+). The protein operates within protein modification; protein lipoylation via exogenous pathway; protein N(6)-(lipoyl)lysine from lipoate: step 1/2. It functions in the pathway protein modification; protein lipoylation via exogenous pathway; protein N(6)-(lipoyl)lysine from lipoate: step 2/2. Catalyzes both the ATP-dependent activation of exogenously supplied lipoate to lipoyl-AMP and the transfer of the activated lipoyl onto the lipoyl domains of lipoate-dependent enzymes. This Saccharomyces cerevisiae (strain YJM789) (Baker's yeast) protein is Putative lipoate-protein ligase A (AIM22).